Reading from the N-terminus, the 227-residue chain is Uracil-DNA glycosylase (227 aa).

Asp68 functions as the Proton acceptor in the catalytic mechanism.

It belongs to the uracil-DNA glycosylase (UDG) superfamily. UNG family.

Its subcellular location is the cytoplasm. The enzyme catalyses Hydrolyzes single-stranded DNA or mismatched double-stranded DNA and polynucleotides, releasing free uracil.. Excises uracil residues from the DNA which can arise as a result of misincorporation of dUMP residues by DNA polymerase or due to deamination of cytosine. The protein is Uracil-DNA glycosylase of Mycobacterium ulcerans (strain Agy99).